A 598-amino-acid polypeptide reads, in one-letter code: Serine/threonine-protein kinase PLK1 (598 aa).

Residues 1 to 23 form a disordered region; sequence MAQVAGKKLTVAPEAAKPPGIPG. Thr-10 is modified (phosphothreonine; by PKA; in vitro). A phosphoserine mark is found at Ser-25 and Ser-26. Residues 44 to 296 enclose the Protein kinase domain; sequence YLRGRFLGKG…IDDLLNDEFF (253 aa). ATP contacts are provided by residues 50–58, Lys-73, and Glu-122; that span reads LGKGGFAKC. Asp-167 serves as the catalytic Proton acceptor. Residues 169–172 and Asp-185 each bind ATP; that span reads KLGN. Residues 185–212 are activation loop; that stretch reads DFGLATKVEYDGERKKTLCGTPNYIAPE. A Phosphothreonine; by PKA modification is found at Thr-201. Ser-260 and Ser-326 each carry phosphoserine; by autocatalysis. Positions 328-331 match the D-box that targets the protein for proteasomal degradation in anaphase motif; it reads RKPL. At Ser-340 the chain carries Phosphoserine; by CDK1. A POLO box 1 domain is found at 404–482; sequence WISKWVDYSD…LKYFRNYMSE (79 aa). The tract at residues 487 to 501 is linker; that stretch reads AGANTTPREGDELAR. The POLO box 2 domain occupies 504-586; that stretch reads FLRTWFRTRS…ARTMVEKLQS (83 aa). The interval 532-534 is important for interaction with phosphorylated proteins; it reads HTK.

It belongs to the protein kinase superfamily. Ser/Thr protein kinase family. As to quaternary structure, interacts with plk1 and kif2a. Interacts with fbxo5. Post-translationally, activated by phosphorylation on Thr-201 during M phase. Phosphorylated by stk10, leading to activation during oocyte maturation. Ubiquitinated by the anaphase promoting complex/cyclosome (APC/C) in anaphase and following DNA damage, leading to its degradation by the proteasome. Protein levels are down-regulated by proteasomal degradation in anaphase.

Its subcellular location is the nucleus. The protein localises to the cytoplasm. It localises to the cytoskeleton. The protein resides in the microtubule organizing center. It is found in the centrosome. Its subcellular location is the spindle. The protein localises to the midbody. It carries out the reaction L-seryl-[protein] + ATP = O-phospho-L-seryl-[protein] + ADP + H(+). The catalysed reaction is L-threonyl-[protein] + ATP = O-phospho-L-threonyl-[protein] + ADP + H(+). Its activity is regulated as follows. Activated by phosphorylation of Thr-201. Its function is as follows. Serine/threonine-protein kinase that performs several important functions throughout M phase of the cell cycle, including the regulation of centrosome maturation and spindle assembly, the removal of cohesins from chromosome arms, the inactivation of anaphase-promoting complex/cyclosome (APC/C) inhibitors, and the regulation of mitotic exit and cytokinesis. Polo-like kinase proteins act by binding and phosphorylating proteins that are already phosphorylated on a specific motif recognized by the POLO box domains. Phosphorylates cdc25, pkmyt1/myt1, stag2/sa2, tpx2. Plays multiple essential roles during mitosis. Phosphorylates the N-terminal domain of cdc25, which leads to cyclin b-cdc2 activation and mitotic entry. Also required for organization of bipolar spindles, and for exit from mitosis. Involved in kinetochore functions and sister chromatid cohesion by phosphorylating stag2/sa2. This is Serine/threonine-protein kinase PLK1 (plk1) from Xenopus laevis (African clawed frog).